The sequence spans 163 residues: Endoribonuclease YbeY (163 aa).

Positions 119, 123, and 129 each coordinate Zn(2+).

Belongs to the endoribonuclease YbeY family. Zn(2+) is required as a cofactor.

The protein resides in the cytoplasm. Functionally, single strand-specific metallo-endoribonuclease involved in late-stage 70S ribosome quality control and in maturation of the 3' terminus of the 16S rRNA. The polypeptide is Endoribonuclease YbeY (Actinobacillus pleuropneumoniae serotype 5b (strain L20)).